Here is a 116-residue protein sequence, read N- to C-terminus: MAGFGLPNFGQLTEAFKKAKEIQQNAQKLQDELESMEIEGKSDDEMIKVWISGNQLPLRVEVKDTIAESNKEEIEKNILEAIKKAHETSTTTMKERMNDLTGGLNLNLPGLDNNDS.

The segment covering 89-98 has biased composition (basic and acidic residues); it reads STTTMKERMN. The disordered stretch occupies residues 89 to 116; the sequence is STTTMKERMNDLTGGLNLNLPGLDNNDS. Positions 99–116 are enriched in low complexity; sequence DLTGGLNLNLPGLDNNDS.

The protein belongs to the YbaB/EbfC family. In terms of assembly, homodimer.

It localises to the cytoplasm. Its subcellular location is the nucleoid. In terms of biological role, binds to DNA and alters its conformation. May be involved in regulation of gene expression, nucleoid organization and DNA protection. The protein is Nucleoid-associated protein P9515_00191 of Prochlorococcus marinus (strain MIT 9515).